Reading from the N-terminus, the 105-residue chain is Small ribosomal subunit protein eS25 (105 aa).

This sequence belongs to the eukaryotic ribosomal protein eS25 family. In terms of assembly, component of the small ribosomal subunit. Mature ribosomes consist of a small (40S) and a large (60S) subunit. The 40S subunit contains about 32 different proteins and 1 molecule of RNA (18S). The 60S subunit contains 45 different proteins and 3 molecules of RNA (25S, 5.8S and 5S).

The protein localises to the cytoplasm. Its function is as follows. Component of the ribosome, a large ribonucleoprotein complex responsible for the synthesis of proteins in the cell. The small ribosomal subunit (SSU) binds messenger RNAs (mRNAs) and translates the encoded message by selecting cognate aminoacyl-transfer RNA (tRNA) molecules. The large subunit (LSU) contains the ribosomal catalytic site termed the peptidyl transferase center (PTC), which catalyzes the formation of peptide bonds, thereby polymerizing the amino acids delivered by tRNAs into a polypeptide chain. The nascent polypeptides leave the ribosome through a tunnel in the LSU and interact with protein factors that function in enzymatic processing, targeting, and the membrane insertion of nascent chains at the exit of the ribosomal tunnel. In Candida albicans (strain SC5314 / ATCC MYA-2876) (Yeast), this protein is Small ribosomal subunit protein eS25 (RPS25B).